The following is a 52-amino-acid chain: uncharacterized protein (52 aa).

This is an uncharacterized protein from Caenorhabditis elegans.